A 430-amino-acid polypeptide reads, in one-letter code: Adenosylhomocysteinase (430 aa).

Positions 56, 131, and 156 each coordinate substrate. 157 to 159 (TTT) provides a ligand contact to NAD(+). Residues Lys-186 and Asp-190 each coordinate substrate. Residues Asn-191, 220 to 225 (GFGDVG), Glu-243, Asn-278, 299 to 301 (IGH), and Asn-344 contribute to the NAD(+) site.

It belongs to the adenosylhomocysteinase family. NAD(+) serves as cofactor.

It localises to the cytoplasm. The enzyme catalyses S-adenosyl-L-homocysteine + H2O = L-homocysteine + adenosine. The protein operates within amino-acid biosynthesis; L-homocysteine biosynthesis; L-homocysteine from S-adenosyl-L-homocysteine: step 1/1. In terms of biological role, may play a key role in the regulation of the intracellular concentration of adenosylhomocysteine. This Halorhodospira halophila (strain DSM 244 / SL1) (Ectothiorhodospira halophila (strain DSM 244 / SL1)) protein is Adenosylhomocysteinase.